The primary structure comprises 154 residues: MGNCLKSPTSDDISLLHESQSDRASFGEGTEPDQEPPPPYQEQVPVPIYHPTPSQTRLATQLTEEEQIRIAQRIGLIQHLPKGVYDPGRDGSEKKIRECVICMMDFVYGDPIRFLPCMHIYHLDCIDDWLMRSFTCPSCMEPVDAALLSSYETN.

Over residues 1–12 (MGNCLKSPTSDD) the composition is skewed to polar residues. Residues 1–52 (MGNCLKSPTSDDISLLHESQSDRASFGEGTEPDQEPPPPYQEQVPVPIYHPT) are disordered. Residue glycine 2 is the site of N-myristoyl glycine attachment. Cysteine 4 carries S-palmitoyl cysteine lipidation. Residues serine 14 and serine 25 each carry the phosphoserine modification. The short motif at 37 to 40 (PPPY) is the PPxY motif element. The RING-type zinc finger occupies 99-140 (CVICMMDFVYGDPIRFLPCMHIYHLDCIDDWLMRSFTCPSCM). Phosphothreonine; by PKB/AKT1 is present on threonine 135.

Interacts (when phosphorylated) with 14-3-3. Interacts with the E3 ubiquitin-ligases NEDD4, ITCH, SMURF2 and WWP1. Also interacts with the E2 ubiquitin-conjugating enzymes UBE2D1 and UBE2N, but neither with CDC34, nor with UBE2L3. Interacts with ZNF350, EPS15 and STAMBP. After TNF stimulation, interacts with TAX1BP1, TNFAIP3 and RIPK1; these interactions are transient and they are lost after 1 hour of stimulation with TNF. Interacts with GGA1. Post-translationally, ubiquitinated in the presence of ITCH, SMURF2 and UBE2D1, as well as WWP1. In terms of processing, phosphorylation by PKB/AKT1 may accelerate degradation by the proteasome. Acylation at both Gly-2 and Cys-4 is required for proper localization to the endosomes.

Its subcellular location is the early endosome. The protein localises to the recycling endosome. It is found in the cytoplasm. It localises to the nucleus. Essential component of a ubiquitin-editing protein complex, comprising also TNFAIP3, ITCH and TAX1BP1, that ensures the transient nature of inflammatory signaling pathways. Promotes the association of TNFAIP3 to RIPK1 after TNF stimulation. TNFAIP3 deubiquitinates 'Lys-63' polyubiquitin chains on RIPK1 and catalyzes the formation of 'Lys-48'-polyubiquitin chains. This leads to RIPK1 proteasomal degradation and consequently termination of the TNF- or LPS-mediated activation of NF-kappa-B. Recruits STAMBP to the E3 ubiquitin-ligase SMURF2 for ubiquitination, leading to its degradation by the 26S proteasome. The polypeptide is RING finger protein 11 (Rnf11) (Mus musculus (Mouse)).